The primary structure comprises 180 residues: ATP-dependent protease subunit HslV (180 aa).

Threonine 5 is an active-site residue. Positions 165, 168, and 171 each coordinate Na(+).

The protein belongs to the peptidase T1B family. HslV subfamily. As to quaternary structure, a double ring-shaped homohexamer of HslV is capped on each side by a ring-shaped HslU homohexamer. The assembly of the HslU/HslV complex is dependent on binding of ATP.

The protein resides in the cytoplasm. The catalysed reaction is ATP-dependent cleavage of peptide bonds with broad specificity.. With respect to regulation, allosterically activated by HslU binding. Functionally, protease subunit of a proteasome-like degradation complex believed to be a general protein degrading machinery. This chain is ATP-dependent protease subunit HslV, found in Helicobacter hepaticus (strain ATCC 51449 / 3B1).